The primary structure comprises 295 residues: Protease HtpX (295 aa).

The next 2 helical transmembrane spans lie at 4 to 24 (ILLFVATNLAVVLVASITLSL) and 41 to 61 (SSLLVFCAVFGFAGSLVSLFI). His-147 is a Zn(2+) binding site. Residue Glu-148 is part of the active site. Zn(2+) is bound at residue His-151. 2 helical membrane-spanning segments follow: residues 158-178 (VTLALVQGVVNTFVMFFARII) and 199-219 (VATIVAELILGILASMIVMWF). Glu-224 provides a ligand contact to Zn(2+).

The protein belongs to the peptidase M48B family. It depends on Zn(2+) as a cofactor.

It is found in the cell inner membrane. The polypeptide is Protease HtpX (Pseudomonas putida (strain GB-1)).